A 276-amino-acid chain; its full sequence is Small ribosomal subunit protein uS3 (276 aa).

The 70-residue stretch at 17–86 (VDEYLAKELD…NPQIDVQDVG (70 aa)) folds into the KH type-2 domain. The tract at residues 193–276 (FQINAPPKEP…AETHGDIQDR (84 aa)) is disordered. The segment covering 214 to 227 (EAEPSQAAETQEQQ) has biased composition (low complexity). Composition is skewed to basic and acidic residues over residues 228–240 (AGEKKSELDRLLD) and 258–276 (PESRTEMSEAETHGDIQDR).

The protein belongs to the universal ribosomal protein uS3 family. As to quaternary structure, part of the 30S ribosomal subunit.

Binds the lower part of the 30S subunit head. The protein is Small ribosomal subunit protein uS3 of Methanothrix thermoacetophila (strain DSM 6194 / JCM 14653 / NBRC 101360 / PT) (Methanosaeta thermophila).